Here is a 126-residue protein sequence, read N- to C-terminus: Small ribosomal subunit protein uS12 (126 aa).

Residues 1–16 (MPTVNQLVRQGRTMNK) are compositionally biased toward polar residues. Residues 1-24 (MPTVNQLVRQGRTMNKTKTKSPAL) are disordered. The residue at position 89 (D89) is a 3-methylthioaspartic acid.

Belongs to the universal ribosomal protein uS12 family. As to quaternary structure, part of the 30S ribosomal subunit. Contacts proteins S8 and S17. May interact with IF1 in the 30S initiation complex.

With S4 and S5 plays an important role in translational accuracy. In terms of biological role, interacts with and stabilizes bases of the 16S rRNA that are involved in tRNA selection in the A site and with the mRNA backbone. Located at the interface of the 30S and 50S subunits, it traverses the body of the 30S subunit contacting proteins on the other side and probably holding the rRNA structure together. The combined cluster of proteins S8, S12 and S17 appears to hold together the shoulder and platform of the 30S subunit. This is Small ribosomal subunit protein uS12 from Elusimicrobium minutum (strain Pei191).